The sequence spans 221 residues: Glutathione S-transferase alpha-5 (221 aa).

The GST N-terminal domain maps to 3-83 (GKPVLHYFDG…YIATKYNLYG (81 aa)). The residue at position 4 (Lys4) is an N6-succinyllysine. Glutathione-binding positions include Tyr9, Arg45, 54–55 (QV), and 67–68 (QT). The GST C-terminal domain occupies 85–207 (DMKERALIDM…LQPGSQRKPF (123 aa)).

Belongs to the GST superfamily. Alpha family. In terms of assembly, heterodimer of YC1 and YC2. In terms of tissue distribution, liver, nasal mucosa and epididymis.

The protein resides in the cytoplasm. It carries out the reaction RX + glutathione = an S-substituted glutathione + a halide anion + H(+). In terms of biological role, conjugation of reduced glutathione to a wide number of exogenous and endogenous hydrophobic electrophiles. Has substantial activity toward aflatoxin B1-8,9-epoxide. The polypeptide is Glutathione S-transferase alpha-5 (Gsta5) (Rattus norvegicus (Rat)).